The following is a 300-amino-acid chain: 4-hydroxy-tetrahydrodipicolinate synthase (300 aa).

Thr-55 is a pyruvate binding site. Residue Tyr-143 is the Proton donor/acceptor of the active site. The Schiff-base intermediate with substrate role is filled by Lys-171. Position 211 (Ile-211) interacts with pyruvate.

It belongs to the DapA family. In terms of assembly, homotetramer; dimer of dimers.

Its subcellular location is the cytoplasm. It carries out the reaction L-aspartate 4-semialdehyde + pyruvate = (2S,4S)-4-hydroxy-2,3,4,5-tetrahydrodipicolinate + H2O + H(+). It participates in amino-acid biosynthesis; L-lysine biosynthesis via DAP pathway; (S)-tetrahydrodipicolinate from L-aspartate: step 3/4. Its function is as follows. Catalyzes the condensation of (S)-aspartate-beta-semialdehyde [(S)-ASA] and pyruvate to 4-hydroxy-tetrahydrodipicolinate (HTPA). This Mycobacterium bovis (strain ATCC BAA-935 / AF2122/97) protein is 4-hydroxy-tetrahydrodipicolinate synthase.